The sequence spans 188 residues: dCTP deaminase (188 aa).

DCTP contacts are provided by residues 111 to 116 (KSTYAR), 135 to 137 (TLE), Q156, Y170, and Q180. E137 (proton donor/acceptor) is an active-site residue.

This sequence belongs to the dCTP deaminase family. In terms of assembly, homotrimer.

It carries out the reaction dCTP + H2O + H(+) = dUTP + NH4(+). It functions in the pathway pyrimidine metabolism; dUMP biosynthesis; dUMP from dCTP (dUTP route): step 1/2. Functionally, catalyzes the deamination of dCTP to dUTP. This chain is dCTP deaminase, found in Pseudomonas syringae pv. tomato (strain ATCC BAA-871 / DC3000).